A 200-amino-acid chain; its full sequence is ATP-dependent Clp protease proteolytic subunit 2 (200 aa).

Residue S96 is the Nucleophile of the active site. H121 is a catalytic residue.

Belongs to the peptidase S14 family. Fourteen ClpP subunits assemble into 2 heptameric rings which stack back to back to give a disk-like structure with a central cavity, resembling the structure of eukaryotic proteasomes.

The protein localises to the cytoplasm. It catalyses the reaction Hydrolysis of proteins to small peptides in the presence of ATP and magnesium. alpha-casein is the usual test substrate. In the absence of ATP, only oligopeptides shorter than five residues are hydrolyzed (such as succinyl-Leu-Tyr-|-NHMec, and Leu-Tyr-Leu-|-Tyr-Trp, in which cleavage of the -Tyr-|-Leu- and -Tyr-|-Trp bonds also occurs).. Functionally, cleaves peptides in various proteins in a process that requires ATP hydrolysis. Has a chymotrypsin-like activity. Plays a major role in the degradation of misfolded proteins. In Synechococcus sp. (strain JA-2-3B'a(2-13)) (Cyanobacteria bacterium Yellowstone B-Prime), this protein is ATP-dependent Clp protease proteolytic subunit 2.